The chain runs to 60 residues: Large ribosomal subunit protein uL30 (60 aa).

Belongs to the universal ribosomal protein uL30 family. In terms of assembly, part of the 50S ribosomal subunit.

The sequence is that of Large ribosomal subunit protein uL30 from Syntrophobacter fumaroxidans (strain DSM 10017 / MPOB).